The primary structure comprises 402 residues: Pyruvate synthase subunit PorA (402 aa).

In terms of assembly, heterotetramer of one alpha, one beta, one delta and one gamma chain.

It catalyses the reaction 2 oxidized [2Fe-2S]-[ferredoxin] + pyruvate + CoA = 2 reduced [2Fe-2S]-[ferredoxin] + acetyl-CoA + CO2 + H(+). The protein is Pyruvate synthase subunit PorA (porA) of Methanosarcina barkeri (strain Fusaro / DSM 804).